Here is a 157-residue protein sequence, read N- to C-terminus: Phosphopantetheine adenylyltransferase (157 aa).

Substrate is bound at residue threonine 10. ATP-binding positions include threonine 10–phenylalanine 11 and histidine 18. 3 residues coordinate substrate: lysine 42, leucine 74, and arginine 88. ATP contacts are provided by residues glycine 89–arginine 91, glutamate 99, and asparagine 124–serine 130.

Belongs to the bacterial CoaD family. Homohexamer. Mg(2+) serves as cofactor.

The protein localises to the cytoplasm. The enzyme catalyses (R)-4'-phosphopantetheine + ATP + H(+) = 3'-dephospho-CoA + diphosphate. It participates in cofactor biosynthesis; coenzyme A biosynthesis; CoA from (R)-pantothenate: step 4/5. Reversibly transfers an adenylyl group from ATP to 4'-phosphopantetheine, yielding dephospho-CoA (dPCoA) and pyrophosphate. The protein is Phosphopantetheine adenylyltransferase of Helicobacter pylori (strain P12).